The primary structure comprises 83 residues: Cell division topological specificity factor (83 aa).

The protein belongs to the MinE family.

In terms of biological role, prevents the cell division inhibition by proteins MinC and MinD at internal division sites while permitting inhibition at polar sites. This ensures cell division at the proper site by restricting the formation of a division septum at the midpoint of the long axis of the cell. The sequence is that of Cell division topological specificity factor from Buchnera aphidicola subsp. Acyrthosiphon pisum (strain 5A).